The primary structure comprises 116 residues: Putative antiporter subunit mnhC2 (116 aa).

A run of 3 helical transmembrane segments spans residues 3–23 (LILL…ILSL), 28–48 (IVIG…SMGH), and 72–92 (AIVL…LVLV).

This sequence belongs to the CPA3 antiporters (TC 2.A.63) subunit C family. As to quaternary structure, may form a heterooligomeric complex that consists of seven subunits: mnhA2, mnhB2, mnhC2, mnhD2, mnhE2, mnhF2 and mnhG2.

It is found in the cell membrane. This is Putative antiporter subunit mnhC2 (mnhC2) from Staphylococcus haemolyticus (strain JCSC1435).